Here is a 449-residue protein sequence, read N- to C-terminus: Glucose-6-phosphate isomerase (449 aa).

E291 functions as the Proton donor in the catalytic mechanism. Catalysis depends on residues H312 and K426.

This sequence belongs to the GPI family.

The protein localises to the cytoplasm. The catalysed reaction is alpha-D-glucose 6-phosphate = beta-D-fructose 6-phosphate. The protein operates within carbohydrate biosynthesis; gluconeogenesis. It participates in carbohydrate degradation; glycolysis; D-glyceraldehyde 3-phosphate and glycerone phosphate from D-glucose: step 2/4. In terms of biological role, catalyzes the reversible isomerization of glucose-6-phosphate to fructose-6-phosphate. The chain is Glucose-6-phosphate isomerase from Streptococcus pyogenes serotype M3 (strain ATCC BAA-595 / MGAS315).